The primary structure comprises 308 residues: Acetaldehyde dehydrogenase (308 aa).

10–13 (SGNI) provides a ligand contact to NAD(+). Cys128 functions as the Acyl-thioester intermediate in the catalytic mechanism. NAD(+) is bound by residues 159–167 (SAGPGTRAN) and Asn285.

The protein belongs to the acetaldehyde dehydrogenase family.

It carries out the reaction acetaldehyde + NAD(+) + CoA = acetyl-CoA + NADH + H(+). This Salinispora tropica (strain ATCC BAA-916 / DSM 44818 / JCM 13857 / NBRC 105044 / CNB-440) protein is Acetaldehyde dehydrogenase.